We begin with the raw amino-acid sequence, 122 residues long: Basic phospholipase A2 LmTX-II (122 aa).

6 cysteine pairs are disulfide-bonded: cysteine 26–cysteine 115, cysteine 28–cysteine 44, cysteine 43–cysteine 95, cysteine 49–cysteine 122, cysteine 50–cysteine 88, and cysteine 75–cysteine 86. The Ca(2+) site is built by tyrosine 27, glycine 29, and glycine 31. The active site involves histidine 47. Residue aspartate 48 coordinates Ca(2+). Residue aspartate 89 is part of the active site.

Monomer. Ca(2+) serves as cofactor. In terms of tissue distribution, expressed by the venom gland.

The protein resides in the secreted. The catalysed reaction is a 1,2-diacyl-sn-glycero-3-phosphocholine + H2O = a 1-acyl-sn-glycero-3-phosphocholine + a fatty acid + H(+). Functionally, snake venom phospholipase A2 (PLA2) that may display neurotoxic and myotoxic activities. May induce inflammatory edema by mechanisms involving mast cell activation and arachidonic acid metabolites. May increase plasma creatine kinase activity. PLA2 catalyzes the calcium-dependent hydrolysis of the 2-acyl groups in 3-sn-phosphoglycerides. The sequence is that of Basic phospholipase A2 LmTX-II from Lachesis muta muta (Bushmaster).